A 430-amino-acid chain; its full sequence is NEDD8-activating enzyme E1 catalytic subunit (430 aa).

52–76 (GLGCELLKNLALSGFRTIEVIDMDT) lines the ATP pocket. Cys211 functions as the Glycyl thioester intermediate in the catalytic mechanism.

The protein belongs to the ubiquitin-activating E1 family. UBA3 subfamily. As to quaternary structure, heterodimer of uba-3 and ula-1. Interacts with NEDD8 and ubc-12. In terms of tissue distribution, expressed in intestine, vulva epithelium and head and tail neurons.

It localises to the nucleus. The protein resides in the cytoplasm. It carries out the reaction ATP + [NEDD8 protein] + [E1 NEDD8-activating enzyme]-L-cysteine = AMP + diphosphate + [E1 NEDD8-activating enzyme]-S-[NEDD8 protein]-yl-L-cysteine.. It participates in protein modification; protein neddylation. Catalytic subunit of the dimeric rfl-1 (uba-3)-ula-1 E1 enzyme. E1 activates NEDD8 by first adenylating its C-terminal glycine residue with ATP, thereafter linking this residue to the side chain of the catalytic cysteine, yielding a NEDD8-uba-3 thioester and free AMP. E1 finally transfers NEDD8 to the catalytic cysteine of ubc-12. Required for cytokinesis and mitotic spindle orientation during early embryogenesis. The chain is NEDD8-activating enzyme E1 catalytic subunit from Caenorhabditis elegans.